The sequence spans 590 residues: DNA mismatch repair protein MutL (590 aa).

Belongs to the DNA mismatch repair MutL/HexB family.

Functionally, this protein is involved in the repair of mismatches in DNA. It is required for dam-dependent methyl-directed DNA mismatch repair. May act as a 'molecular matchmaker', a protein that promotes the formation of a stable complex between two or more DNA-binding proteins in an ATP-dependent manner without itself being part of a final effector complex. In Caldanaerobacter subterraneus subsp. tengcongensis (strain DSM 15242 / JCM 11007 / NBRC 100824 / MB4) (Thermoanaerobacter tengcongensis), this protein is DNA mismatch repair protein MutL.